Here is a 213-residue protein sequence, read N- to C-terminus: rRNA N(6)-adenosine-methyltransferase Mettl5 (213 aa).

S-adenosyl-L-methionine-binding positions include Q28, T31, G59, C62, and 108–109 (DV).

The protein belongs to the methyltransferase superfamily. PrmA family. In terms of assembly, heterodimer; heterodimerizes with Trmt112. As to expression, enriched in the brain.

It is found in the cytoplasm. It carries out the reaction adenosine in rRNA + S-adenosyl-L-methionine = N(6)-methyladenosine in rRNA + S-adenosyl-L-homocysteine + H(+). Catalytic subunit of a heterodimer with Trmt112, which specifically methylates the 6th position of adenine in 18S rRNA. This is rRNA N(6)-adenosine-methyltransferase Mettl5 from Drosophila melanogaster (Fruit fly).